The primary structure comprises 1100 residues: Beta-alanine-activating enzyme (1100 aa).

The interval 162–181 (HKVTDREDRVSAESRTPEKE) is disordered. ATP-binding positions include 197–205 (TSGTTGTPK), D427, R441, and K526. In terms of domain architecture, Carrier spans 552-632 (EELWGKLQYL…DVYNHIVQAV (81 aa)). S591 is subject to O-(pantetheine 4'-phosphoryl)serine. Positions 643-671 (SYTTKRKFSDADPEEASGKPARLESAWPS) are disordered. At S651 the chain carries Phosphoserine.

It belongs to the ATP-dependent AMP-binding enzyme family.

Its function is as follows. Covalently binds beta-alanine in an ATP-dependent manner to form a thioester bond with its phosphopantetheine group and transfers it to an as yet unknown acceptor via an amide bond. May be required for a post-translational protein modification or for post-transcriptional modification of an RNA. This is Beta-alanine-activating enzyme (Aasdh) from Mus musculus (Mouse).